The primary structure comprises 429 residues: Histidinol dehydrogenase (429 aa).

NAD(+) is bound by residues Tyr127, Gln188, and Asn211. The substrate site is built by Ser234, Gln256, and His259. Zn(2+) is bound by residues Gln256 and His259. Residues Glu324 and His325 each act as proton acceptor in the active site. Substrate is bound by residues His325, Asp358, Glu412, and His417. Residue Asp358 coordinates Zn(2+). Zn(2+) is bound at residue His417.

Belongs to the histidinol dehydrogenase family. Requires Zn(2+) as cofactor.

It carries out the reaction L-histidinol + 2 NAD(+) + H2O = L-histidine + 2 NADH + 3 H(+). It participates in amino-acid biosynthesis; L-histidine biosynthesis; L-histidine from 5-phospho-alpha-D-ribose 1-diphosphate: step 9/9. Functionally, catalyzes the sequential NAD-dependent oxidations of L-histidinol to L-histidinaldehyde and then to L-histidine. The chain is Histidinol dehydrogenase from Bacillus anthracis.